The primary structure comprises 300 residues: 4-hydroxy-tetrahydrodipicolinate synthase (300 aa).

Threonine 46 lines the pyruvate pocket. Catalysis depends on tyrosine 134, which acts as the Proton donor/acceptor. The Schiff-base intermediate with substrate role is filled by lysine 162. Isoleucine 207 serves as a coordination point for pyruvate.

This sequence belongs to the DapA family. Homotetramer; dimer of dimers.

The protein localises to the cytoplasm. The enzyme catalyses L-aspartate 4-semialdehyde + pyruvate = (2S,4S)-4-hydroxy-2,3,4,5-tetrahydrodipicolinate + H2O + H(+). It functions in the pathway amino-acid biosynthesis; L-lysine biosynthesis via DAP pathway; (S)-tetrahydrodipicolinate from L-aspartate: step 3/4. Its function is as follows. Catalyzes the condensation of (S)-aspartate-beta-semialdehyde [(S)-ASA] and pyruvate to 4-hydroxy-tetrahydrodipicolinate (HTPA). The polypeptide is 4-hydroxy-tetrahydrodipicolinate synthase (Protochlamydia amoebophila (strain UWE25)).